We begin with the raw amino-acid sequence, 228 residues long: MSDISYREINANGFWHNNPGLVQLLGLCPLLAISGTVVNALGLGLATTLTLVASNVTVSLIRHWVRPEIRIPVFVLIIASVVTAIELAMNAFFHELYLILGIFIPLIVTNCAIIGRAEAFASKQPIPKALADGLAMGLGFTCVLVALGALREAVGHGTLLADAHLMFGEAARGFSLTLFEEYRGFLLALLPPGAFIALGLLIALKNIIDARLQKRQPAQAAVPVEAAG.

The next 5 membrane-spanning stretches (helical) occupy residues L24–G44, V73–F93, E95–G115, L130–L150, and G184–L204.

The protein belongs to the NqrDE/RnfAE family. In terms of assembly, the complex is composed of six subunits: RnfA, RnfB, RnfC, RnfD, RnfE and RnfG.

It is found in the cell inner membrane. Functionally, part of a membrane-bound complex that couples electron transfer with translocation of ions across the membrane. The sequence is that of Ion-translocating oxidoreductase complex subunit E from Thioalkalivibrio sulfidiphilus (strain HL-EbGR7).